The following is a 233-amino-acid chain: Orotidine 5'-phosphate decarboxylase (233 aa).

Substrate is bound by residues Asp-11, Lys-34, 61–70, Thr-117, Arg-179, Gln-189, Gly-209, and Arg-210; that span reads DLKLHDIPNT. Lys-63 functions as the Proton donor in the catalytic mechanism.

Belongs to the OMP decarboxylase family. Type 1 subfamily. In terms of assembly, homodimer.

The catalysed reaction is orotidine 5'-phosphate + H(+) = UMP + CO2. The protein operates within pyrimidine metabolism; UMP biosynthesis via de novo pathway; UMP from orotate: step 2/2. In terms of biological role, catalyzes the decarboxylation of orotidine 5'-monophosphate (OMP) to uridine 5'-monophosphate (UMP). The protein is Orotidine 5'-phosphate decarboxylase of Streptococcus agalactiae serotype V (strain ATCC BAA-611 / 2603 V/R).